Reading from the N-terminus, the 282-residue chain is 4-hydroxy-3-methylbut-2-enyl diphosphate reductase (282 aa).

Position 12 (Cys-12) interacts with [4Fe-4S] cluster. (2E)-4-hydroxy-3-methylbut-2-enyl diphosphate-binding residues include His-40 and His-72. The dimethylallyl diphosphate site is built by His-40 and His-72. 2 residues coordinate isopentenyl diphosphate: His-40 and His-72. Residue Cys-94 participates in [4Fe-4S] cluster binding. A (2E)-4-hydroxy-3-methylbut-2-enyl diphosphate-binding site is contributed by His-122. His-122 contributes to the dimethylallyl diphosphate binding site. His-122 contributes to the isopentenyl diphosphate binding site. The active-site Proton donor is Glu-124. Position 160 (Thr-160) interacts with (2E)-4-hydroxy-3-methylbut-2-enyl diphosphate. Cys-188 contributes to the [4Fe-4S] cluster binding site. (2E)-4-hydroxy-3-methylbut-2-enyl diphosphate-binding residues include Ser-216, Asn-218, and Ser-260. Residues Ser-216, Asn-218, and Ser-260 each coordinate dimethylallyl diphosphate. Isopentenyl diphosphate-binding residues include Ser-216, Asn-218, and Ser-260.

The protein belongs to the IspH family. [4Fe-4S] cluster serves as cofactor.

The enzyme catalyses isopentenyl diphosphate + 2 oxidized [2Fe-2S]-[ferredoxin] + H2O = (2E)-4-hydroxy-3-methylbut-2-enyl diphosphate + 2 reduced [2Fe-2S]-[ferredoxin] + 2 H(+). It carries out the reaction dimethylallyl diphosphate + 2 oxidized [2Fe-2S]-[ferredoxin] + H2O = (2E)-4-hydroxy-3-methylbut-2-enyl diphosphate + 2 reduced [2Fe-2S]-[ferredoxin] + 2 H(+). Its pathway is isoprenoid biosynthesis; dimethylallyl diphosphate biosynthesis; dimethylallyl diphosphate from (2E)-4-hydroxy-3-methylbutenyl diphosphate: step 1/1. The protein operates within isoprenoid biosynthesis; isopentenyl diphosphate biosynthesis via DXP pathway; isopentenyl diphosphate from 1-deoxy-D-xylulose 5-phosphate: step 6/6. Functionally, catalyzes the conversion of 1-hydroxy-2-methyl-2-(E)-butenyl 4-diphosphate (HMBPP) into a mixture of isopentenyl diphosphate (IPP) and dimethylallyl diphosphate (DMAPP). Acts in the terminal step of the DOXP/MEP pathway for isoprenoid precursor biosynthesis. This Geotalea uraniireducens (strain Rf4) (Geobacter uraniireducens) protein is 4-hydroxy-3-methylbut-2-enyl diphosphate reductase.